A 166-amino-acid polypeptide reads, in one-letter code: Large ribosomal subunit protein uL11z (166 aa).

This sequence belongs to the universal ribosomal protein uL11 family.

Its function is as follows. Binds directly to 26S ribosomal RNA. The sequence is that of Large ribosomal subunit protein uL11z (RPL12A) from Arabidopsis thaliana (Mouse-ear cress).